A 695-amino-acid polypeptide reads, in one-letter code: Putative pentatricopeptide repeat-containing protein At1g77010, mitochondrial (695 aa).

A mitochondrion-targeting transit peptide spans 1-64; sequence MILKYNSSYR…KGFLSSIVIV (64 aa). PPR repeat units lie at residues 61 to 91, 92 to 122, 123 to 157, 159 to 184, 186 to 220, 221 to 251, 252 to 282, 283 to 313, 317 to 351, 352 to 382, 383 to 417, 418 to 448, 449 to 483, 484 to 514, 515 to 549, 550 to 585, and 586 to 616; these read IVIV…MPDR, NYFS…MPER, DGYS…DVVT, NSLL…LNFS, DAIT…GVEC, DSKM…IREP, DDHS…KSNR, CVIL…MRNE, DSRT…GLID, DIVV…VESY, DTIL…SLIS, WNSM…DLPT, DEVS…GLDS, DQVV…MVKS, DEVP…GIRP, TQIT…GFVP, and DKEH…MPFD. Residues 621–695 are type E motif; degenerate; the sequence is MWSSILRGCV…KNPGSSWTDC (75 aa).

This sequence belongs to the PPR family. PCMP-E subfamily.

The protein localises to the mitochondrion. In Arabidopsis thaliana (Mouse-ear cress), this protein is Putative pentatricopeptide repeat-containing protein At1g77010, mitochondrial (PCMP-E5).